The chain runs to 193 residues: FMN-dependent NADH:quinone oxidoreductase 1 (193 aa).

FMN-binding positions include serine 9, 15–17 (SIS), and 85–88 (MYNF).

Belongs to the azoreductase type 1 family. As to quaternary structure, homodimer. The cofactor is FMN.

The enzyme catalyses 2 a quinone + NADH + H(+) = 2 a 1,4-benzosemiquinone + NAD(+). It carries out the reaction N,N-dimethyl-1,4-phenylenediamine + anthranilate + 2 NAD(+) = 2-(4-dimethylaminophenyl)diazenylbenzoate + 2 NADH + 2 H(+). Its function is as follows. Quinone reductase that provides resistance to thiol-specific stress caused by electrophilic quinones. In terms of biological role, also exhibits azoreductase activity. Catalyzes the reductive cleavage of the azo bond in aromatic azo compounds to the corresponding amines. This Xanthomonas axonopodis pv. citri (strain 306) protein is FMN-dependent NADH:quinone oxidoreductase 1.